Here is a 259-residue protein sequence, read N- to C-terminus: Small ribosomal subunit protein uS2 (259 aa).

The disordered stretch occupies residues 232 to 259 (KAMEAEETKAAEKAVETEAKEETPQEAK).

This sequence belongs to the universal ribosomal protein uS2 family.

The protein is Small ribosomal subunit protein uS2 of Maridesulfovibrio salexigens (strain ATCC 14822 / DSM 2638 / NCIMB 8403 / VKM B-1763) (Desulfovibrio salexigens).